Here is a 457-residue protein sequence, read N- to C-terminus: Glutamate--tRNA ligase 1 (457 aa).

Residues Pro9–Asn19 carry the 'HIGH' region motif. The 'KMSKS' region signature appears at Gly250–Arg254. Residue Lys253 participates in ATP binding.

This sequence belongs to the class-I aminoacyl-tRNA synthetase family. Glutamate--tRNA ligase type 1 subfamily. Monomer.

Its subcellular location is the cytoplasm. It catalyses the reaction tRNA(Glu) + L-glutamate + ATP = L-glutamyl-tRNA(Glu) + AMP + diphosphate. Catalyzes the attachment of glutamate to tRNA(Glu) in a two-step reaction: glutamate is first activated by ATP to form Glu-AMP and then transferred to the acceptor end of tRNA(Glu). The sequence is that of Glutamate--tRNA ligase 1 from Brucella ovis (strain ATCC 25840 / 63/290 / NCTC 10512).